The following is a 130-amino-acid chain: Protein ApaG (130 aa).

The region spanning 3 to 127 (RALTRDIEVT…FSLDSPGLMR (125 aa)) is the ApaG domain.

The chain is Protein ApaG from Agrobacterium fabrum (strain C58 / ATCC 33970) (Agrobacterium tumefaciens (strain C58)).